The sequence spans 298 residues: Protease HtpX (298 aa).

Helical transmembrane passes span 4–24 (IGLF…TMNL) and 38–58 (LGNL…VSLA). Residue histidine 145 participates in Zn(2+) binding. The active site involves glutamate 146. Histidine 149 contributes to the Zn(2+) binding site. A run of 2 helical transmembrane segments spans residues 160–180 (LLQG…AYVV) and 194–214 (ITFI…ASMI). Zn(2+) is bound at residue glutamate 223.

Belongs to the peptidase M48B family. Zn(2+) serves as cofactor.

It is found in the cell inner membrane. This chain is Protease HtpX, found in Hydrogenovibrio crunogenus (strain DSM 25203 / XCL-2) (Thiomicrospira crunogena).